The following is a 275-amino-acid chain: NH(3)-dependent NAD(+) synthetase (275 aa).

50-57 (GISGGVDS) contacts ATP. D56 lines the Mg(2+) pocket. Residue R147 participates in deamido-NAD(+) binding. T167 provides a ligand contact to ATP. Residue E172 coordinates Mg(2+). The deamido-NAD(+) site is built by K180 and D187. ATP is bound by residues K196 and T218. 267–268 (HK) contributes to the deamido-NAD(+) binding site.

This sequence belongs to the NAD synthetase family. In terms of assembly, homodimer.

It carries out the reaction deamido-NAD(+) + NH4(+) + ATP = AMP + diphosphate + NAD(+) + H(+). Its pathway is cofactor biosynthesis; NAD(+) biosynthesis; NAD(+) from deamido-NAD(+) (ammonia route): step 1/1. In terms of biological role, catalyzes the ATP-dependent amidation of deamido-NAD to form NAD. Uses ammonia as a nitrogen source. The protein is NH(3)-dependent NAD(+) synthetase of Stutzerimonas stutzeri (strain A1501) (Pseudomonas stutzeri).